The primary structure comprises 239 residues: Uridylate kinase (239 aa).

Lys13–Gly16 lines the ATP pocket. Gly55 contacts UMP. Gly56 and Arg60 together coordinate ATP. Residues Asp75 and Thr136 to Thr143 each bind UMP. Thr163, Gln164, Tyr169, and Asp172 together coordinate ATP.

This sequence belongs to the UMP kinase family. In terms of assembly, homohexamer.

The protein resides in the cytoplasm. It carries out the reaction UMP + ATP = UDP + ADP. The protein operates within pyrimidine metabolism; CTP biosynthesis via de novo pathway; UDP from UMP (UMPK route): step 1/1. With respect to regulation, inhibited by UTP. Catalyzes the reversible phosphorylation of UMP to UDP. This is Uridylate kinase from Bartonella quintana (strain Toulouse) (Rochalimaea quintana).